The following is a 174-amino-acid chain: NADH-quinone oxidoreductase subunit I (174 aa).

2 4Fe-4S ferredoxin-type domains span residues 44-74 (LNRYPDGLEKCIGCELCAWACPADAIYVEGD) and 90-119 (RVYQINYLRCIGCGLCIEACPTRALTMTND). Cys54, Cys57, Cys60, Cys64, Cys99, Cys102, Cys105, and Cys109 together coordinate [4Fe-4S] cluster.

The protein belongs to the complex I 23 kDa subunit family. As to quaternary structure, NDH-1 is composed of 14 different subunits. Subunits NuoA, H, J, K, L, M, N constitute the membrane sector of the complex. [4Fe-4S] cluster is required as a cofactor.

The protein localises to the cell membrane. The catalysed reaction is a quinone + NADH + 5 H(+)(in) = a quinol + NAD(+) + 4 H(+)(out). Functionally, NDH-1 shuttles electrons from NADH, via FMN and iron-sulfur (Fe-S) centers, to quinones in the respiratory chain. The immediate electron acceptor for the enzyme in this species is believed to be menaquinone. Couples the redox reaction to proton translocation (for every two electrons transferred, four hydrogen ions are translocated across the cytoplasmic membrane), and thus conserves the redox energy in a proton gradient. This Mycobacterium sp. (strain JLS) protein is NADH-quinone oxidoreductase subunit I.